A 266-amino-acid chain; its full sequence is Glucosamine-6-phosphate deaminase (266 aa).

D72 functions as the Proton acceptor; for enolization step in the catalytic mechanism. D141 functions as the For ring-opening step in the catalytic mechanism. H143 (proton acceptor; for ring-opening step) is an active-site residue. Catalysis depends on E148, which acts as the For ring-opening step.

The protein belongs to the glucosamine/galactosamine-6-phosphate isomerase family. NagB subfamily. As to quaternary structure, homohexamer.

The enzyme catalyses alpha-D-glucosamine 6-phosphate + H2O = beta-D-fructose 6-phosphate + NH4(+). The protein operates within amino-sugar metabolism; N-acetylneuraminate degradation; D-fructose 6-phosphate from N-acetylneuraminate: step 5/5. With respect to regulation, allosterically activated by N-acetylglucosamine 6-phosphate (GlcNAc6P). Catalyzes the reversible isomerization-deamination of glucosamine 6-phosphate (GlcN6P) to form fructose 6-phosphate (Fru6P) and ammonium ion. The chain is Glucosamine-6-phosphate deaminase from Tolumonas auensis (strain DSM 9187 / NBRC 110442 / TA 4).